Consider the following 762-residue polypeptide: Proline-rich receptor-like protein kinase PERK10 (762 aa).

The interval 1–322 (MTTPAQAPRE…PTPVTDNSSS (322 aa)) is disordered. Over 1-328 (MTTPAQAPRE…NSSSSGISIA (328 aa)) the chain is Extracellular. A compositionally biased stretch (low complexity) spans 13 to 23 (SLSPSLASPPL). N37 carries N-linked (GlcNAc...) asparagine glycosylation. Residues 41-57 (PTREPTNGNPPETTNTP) are compositionally biased toward low complexity. Composition is skewed to pro residues over residues 60–210 (SSPP…PSTP), 231–246 (PPPP…PPSP), and 254–275 (HPSP…PDPL). Residues 276–305 (PSNSSSPPTLLPPSSVVSPPSPPRKSVSGP) are compositionally biased toward low complexity. Residues N278 and N319 are each glycosylated (N-linked (GlcNAc...) asparagine). A helical membrane pass occupies residues 329–349 (AVVGVSIGVALVLLTLIGVVV). The Cytoplasmic portion of the chain corresponds to 350–762 (CCLKKRKKRL…NSYISKDENL (413 aa)). Residues 370-410 (TPMESSSPRSDSALLKTQSSAPLVGNRSSNRTYLSQSEPGG) are disordered. Over residues 372–407 (MESSSPRSDSALLKTQSSAPLVGNRSSNRTYLSQSE) the composition is skewed to polar residues. The Protein kinase domain maps to 430–706 (FSDENLLGEG…SQIVRAFDSL (277 aa)). ATP-binding positions include 436-444 (LGEGGFGRV) and K458. D554 (proton acceptor) is an active-site residue.

It belongs to the protein kinase superfamily. Ser/Thr protein kinase family. Interacts with KIPK1 and KIPK2 (via its cytosolic domain). Mostly expressed in inflorescence bolts and flower buds, and, to a lower extent, in roots, seedlings, leaves and siliques.

Its subcellular location is the cell membrane. It catalyses the reaction L-seryl-[protein] + ATP = O-phospho-L-seryl-[protein] + ADP + H(+). It carries out the reaction L-threonyl-[protein] + ATP = O-phospho-L-threonyl-[protein] + ADP + H(+). Could be involved in the negative regulation of root growth. The sequence is that of Proline-rich receptor-like protein kinase PERK10 (PERK10) from Arabidopsis thaliana (Mouse-ear cress).